Reading from the N-terminus, the 335-residue chain is Cell division protein ZipA (335 aa).

Topologically, residues 1–4 are periplasmic; it reads MDLN. The chain crosses the membrane as a helical span at residues 5–25; sequence AILIILGVIALIILVAHGIWS. Over 26–335 the chain is Cytoplasmic; it reads NRCEKSQYFE…AERDYLARVS (310 aa).

This sequence belongs to the ZipA family. Interacts with FtsZ via their C-terminal domains.

The protein localises to the cell inner membrane. Essential cell division protein that stabilizes the FtsZ protofilaments by cross-linking them and that serves as a cytoplasmic membrane anchor for the Z ring. Also required for the recruitment to the septal ring of downstream cell division proteins. This Histophilus somni (strain 129Pt) (Haemophilus somnus) protein is Cell division protein ZipA.